A 176-amino-acid chain; its full sequence is NAD(P)H-quinone oxidoreductase subunit 6, chloroplastic (176 aa).

Transmembrane regions (helical) follow at residues 10–30, 32–52, 61–81, 92–112, and 152–172; these read FLLV…VLLP, PIYS…FYIL, AQLL…VMFM, LWTV…ISLI, and FFLP…GAIA.

Belongs to the complex I subunit 6 family. As to quaternary structure, NDH is composed of at least 16 different subunits, 5 of which are encoded in the nucleus.

Its subcellular location is the plastid. The protein localises to the chloroplast thylakoid membrane. It catalyses the reaction a plastoquinone + NADH + (n+1) H(+)(in) = a plastoquinol + NAD(+) + n H(+)(out). The catalysed reaction is a plastoquinone + NADPH + (n+1) H(+)(in) = a plastoquinol + NADP(+) + n H(+)(out). Its function is as follows. NDH shuttles electrons from NAD(P)H:plastoquinone, via FMN and iron-sulfur (Fe-S) centers, to quinones in the photosynthetic chain and possibly in a chloroplast respiratory chain. The immediate electron acceptor for the enzyme in this species is believed to be plastoquinone. Couples the redox reaction to proton translocation, and thus conserves the redox energy in a proton gradient. This chain is NAD(P)H-quinone oxidoreductase subunit 6, chloroplastic (ndhG), found in Solanum lycopersicum (Tomato).